A 547-amino-acid chain; its full sequence is Cytochrome P450 monooxygenase 128 (547 aa).

The helical transmembrane segment at 9-25 threads the bilayer; it reads IPWAAGATLLAWAAYKI. N336 and N438 each carry an N-linked (GlcNAc...) asparagine glycan. C483 contributes to the heme binding site.

It belongs to the cytochrome P450 family. The cofactor is heme.

It localises to the membrane. It functions in the pathway secondary metabolite biosynthesis. Cytochrome P450 monooxygenase that is able to use 7-ethoxycoumarin and testosterone as substrates for oxidation. This chain is Cytochrome P450 monooxygenase 128, found in Postia placenta (strain ATCC 44394 / Madison 698-R) (Brown rot fungus).